The following is a 297-amino-acid chain: D-aminoacyl-tRNA deacylase (297 aa).

Belongs to the DtdA deacylase family. As to quaternary structure, monomer. Requires Zn(2+) as cofactor.

It catalyses the reaction a D-aminoacyl-tRNA + H2O = a tRNA + a D-alpha-amino acid + H(+). It carries out the reaction glycyl-tRNA(Ala) + H2O = tRNA(Ala) + glycine + H(+). Functionally, D-aminoacyl-tRNA deacylase with broad substrate specificity. By recycling D-aminoacyl-tRNA to D-amino acids and free tRNA molecules, this enzyme counteracts the toxicity associated with the formation of D-aminoacyl-tRNA entities in vivo. The protein is D-aminoacyl-tRNA deacylase of Methanosarcina mazei (strain ATCC BAA-159 / DSM 3647 / Goe1 / Go1 / JCM 11833 / OCM 88) (Methanosarcina frisia).